Here is a 279-residue protein sequence, read N- to C-terminus: Eukaryotic translation initiation factor 3 subunit J (279 aa).

2 disordered regions span residues 1-74 (MSWD…SQKS) and 229-279 (ERQA…DDFM). Over residues 20 to 39 (WEDEDNDDPLLESWDIDEEE) the composition is skewed to acidic residues. Residues 34-74 (DIDEEEVARKKKEEEAKKKAEKEALKQKQQEAKNKKLSQKS) adopt a coiled-coil conformation. Positions 40-67 (VARKKKEEEAKKKAEKEALKQKQQEAKN) are enriched in basic and acidic residues. Residues 268–279 (DDFDDFDDDDFM) are compositionally biased toward acidic residues.

This sequence belongs to the eIF-3 subunit J family. In terms of assembly, component of the eukaryotic translation initiation factor 3 (eIF-3) complex.

It is found in the cytoplasm. Component of the eukaryotic translation initiation factor 3 (eIF-3) complex, which is involved in protein synthesis of a specialized repertoire of mRNAs and, together with other initiation factors, stimulates binding of mRNA and methionyl-tRNAi to the 40S ribosome. The eIF-3 complex specifically targets and initiates translation of a subset of mRNAs involved in cell proliferation. The polypeptide is Eukaryotic translation initiation factor 3 subunit J (Meyerozyma guilliermondii (strain ATCC 6260 / CBS 566 / DSM 6381 / JCM 1539 / NBRC 10279 / NRRL Y-324) (Yeast)).